We begin with the raw amino-acid sequence, 210 residues long: MAIVLGAKERKDKKHSTLRRIRSQGGIPAVLYGKKVDNKMISISAADLEKALREGGRHSLVTLKVDGEDYSVLLREVQRDPLRGELLHADFQAVDMSAEVDVDVEVRLVGEAPGVKDGGVLQQNLHELSIRVLPANIPPAIEVDISGLQVGDVITVGDVQTGGTFEINHEPSEVIATILPPQQEEEIHSGEQQEPGQPEAEEGRETTPEG.

A disordered region spans residues 179-210 (LPPQQEEEIHSGEQQEPGQPEAEEGRETTPEG). A compositionally biased stretch (basic and acidic residues) spans 201–210 (EEGRETTPEG).

The protein belongs to the bacterial ribosomal protein bL25 family. CTC subfamily. In terms of assembly, part of the 50S ribosomal subunit; part of the 5S rRNA/L5/L18/L25 subcomplex. Contacts the 5S rRNA. Binds to the 5S rRNA independently of L5 and L18.

This is one of the proteins that binds to the 5S RNA in the ribosome where it forms part of the central protuberance. This Geobacillus thermodenitrificans (strain NG80-2) protein is Large ribosomal subunit protein bL25.